The chain runs to 247 residues: Protein lin-28 homolog B (247 aa).

The disordered stretch occupies residues 1-22; it reads MAEGGASKGEEPEKLPGLAEDE. Positions 27-100 constitute a CSD domain; that stretch reads HGTGHCKWFN…GLESIRVTGP (74 aa). A phosphoserine mark is found at serine 94, serine 103, and serine 108. The segment at 96 to 124 is disordered; the sequence is RVTGPGGSPCLGSERRPKGKTLQKRKPKG. The segment covering 112–123 has biased composition (basic residues); it reads PKGKTLQKRKPK. 2 consecutive CCHC-type zinc fingers follow at residues 125-142 and 147-164; these read DRCY…ECSL and KKCH…NCPH. Zn(2+)-binding residues include cysteine 127, cysteine 130, histidine 135, cysteine 140, cysteine 149, cysteine 152, histidine 157, and cysteine 162. The segment covering 173–186 has biased composition (polar residues); sequence SSQGRQEAESQPCS. Positions 173–247 are disordered; sequence SSQGRQEAES…GPLIQKRKKT (75 aa). The segment covering 207-219 has biased composition (basic and acidic residues); it reads VKSEMAEHSDRSP.

Belongs to the lin-28 family.

The protein resides in the nucleus. It localises to the nucleolus. Functionally, suppressor of microRNA (miRNA) biogenesis, including that of let-7 and possibly of miR107, miR-143 and miR-200c. Binds primary let-7 transcripts (pri-let-7), including pri-let-7g and pri-let-7a-1, and sequester them in the nucleolus, away from the microprocessor complex, hence preventing their processing into mature miRNA. Does not act on pri-miR21. The repression of let-7 expression is required for normal development and contributes to maintain the pluripotent state of embryonic stem cells by preventing let-7-mediated differentiation. When overexpressed, recruits ZCCHC11/TUT4 uridylyltransferase to pre-let-7 transcripts, leading to their terminal uridylation and degradation. This activity might not be relevant in vivo, as LIN28B-mediated inhibition of let-7 miRNA maturation appears to be ZCCHC11-independent. Interaction with target pre-miRNAs occurs via an 5'-GGAG-3' motif in the pre-miRNA terminal loop. Mediates MYC-induced let-7 repression. When overexpressed, may stimulate growth of carcinoma cell lines. The chain is Protein lin-28 homolog B (Lin28b) from Mus musculus (Mouse).